A 398-amino-acid polypeptide reads, in one-letter code: Phosphoglycerate kinase (398 aa).

Residues 23–25, Arg-38, 61–64, Arg-120, and Arg-153 each bind substrate; these read DLN and HFGR. Residues Lys-203, Glu-325, and 355–358 contribute to the ATP site; that span reads GGDT.

This sequence belongs to the phosphoglycerate kinase family. In terms of assembly, monomer.

Its subcellular location is the cytoplasm. It carries out the reaction (2R)-3-phosphoglycerate + ATP = (2R)-3-phospho-glyceroyl phosphate + ADP. Its pathway is carbohydrate degradation; glycolysis; pyruvate from D-glyceraldehyde 3-phosphate: step 2/5. This is Phosphoglycerate kinase from Chelativorans sp. (strain BNC1).